We begin with the raw amino-acid sequence, 144 residues long: MTRSAPAASATSRTAIGSAGAPAADARRALGARAEDAVVAHLAAQGVEIVARNARVGRLEIDVVARDGPVIAIIEVRTRGAGSYVRALDSIDARKRARVRRAGERLWRATFSRVRGVERMRFDAASVTFLPSGEATVEIIKAAF.

This sequence belongs to the UPF0102 family.

In Sorangium cellulosum (strain So ce56) (Polyangium cellulosum (strain So ce56)), this protein is UPF0102 protein sce2912.